A 514-amino-acid chain; its full sequence is Maturase K (514 aa).

This sequence belongs to the intron maturase 2 family. MatK subfamily.

The protein resides in the plastid. It is found in the chloroplast. In terms of biological role, usually encoded in the trnK tRNA gene intron. Probably assists in splicing its own and other chloroplast group II introns. The sequence is that of Maturase K from Lepidozamia peroffskyana (Peroffsky's lepidozamia).